The sequence spans 3907 residues: A-kinase anchor protein 9 (3907 aa).

Over residues 1–14 (MEDEERQKKLEAGK) the composition is skewed to basic and acidic residues. The segment at 1-57 (MEDEERQKKLEAGKAKLAQFRQRKAQSDGQSPSKKQKKKRKTSSSKHDVSAHHDLNI) is disordered. Basic residues predominate over residues 34–44 (KKQKKKRKTSS). Positions 45–56 (SKHDVSAHHDLN) are enriched in basic and acidic residues. Coiled coils occupy residues 152–902 (DSPT…ELHL), 932–1010 (EVVE…ENVQ), 1088–1173 (QPSE…QTMK), 1241–1268 (ELQD…EEYN), 1324–1380 (KLSS…ESTV), 1422–1447 (VKEE…VAKV), and 1573–1647 (SMDA…DNEN). Phosphoserine is present on serine 153. Residue serine 1327 is modified to Phosphoserine. The segment covering 1682-1692 (STQTQNGNENQ) has biased composition (low complexity). Positions 1682-1713 (STQTQNGNENQGEVEEQTFKEKELDRKPEDVP) are disordered. Positions 1698-1711 (QTFKEKELDRKPED) are enriched in basic and acidic residues. The residue at position 1765 (serine 1765) is a Phosphoserine. Coiled coils occupy residues 1845 to 2443 (NISS…VEKI), 2532 to 2549 (ETEM…IVEE), 2591 to 2764 (QLRE…SKKA), 3061 to 3088 (LNCL…ADRR), 3120 to 3466 (ELLE…NLNE), and 3583 to 3685 (SLTE…NDSL). Residues 2542–2555 (NLQKIVEEKVAAAL) are PKA-RII subunit binding domain. Positions 3377-3405 (RQQMEKDRQVHRKTLQTEQEANTEGQKKM) are disordered. A phosphoserine mark is found at serine 3690, serine 3842, serine 3865, and serine 3897.

Interacts with the regulatory region of protein kinase N (PKN), protein phosphatase 2A (PP2A), protein phosphatase 1 (PP1) and the immature non-phosphorylated form of PKC epsilon. Interacts with CIP4 and FNBP1. Interacts with chloride intracellular channel proteins CLIC1, CLIC4 and CLIC5. CSNK1D binding promotes its centrosomal subcellular location. Interacts with GM130/GOLGA2; leading to recruitment to the Golgi apparatus. Interacts with KCNQ1; targets protein kinase A (PKA) catalytic and regulatory subunits and protein phosphatase 1 (PP1), to the heterodimer KCNQ1-KCNE1. Interacts with PDE4DIP isoform 13/MMG8/SMYLE; this interaction stabilizes both proteins. In complex with PDE4DIP isoform 13, recruits CAMSAP2 to the Golgi apparatus. Forms a pericentrosomal complex with CDK5RAP2, EB1/MAPRE1 and PDE4DIP isoform 13; within this complex, MAPRE1 binding to CDK5RAP2 may be mediated by PDE4DIP. Interacts with MAPRE1 and MAPRE3. Interacts (via C-terminus) with CAMSAP2; this interaction is much stronger in the presence of PDE4DIP isoform 13/MMG8/SMYLE. Interacts with CAMSAP3. Interacts (via C-terminus) with the gamma-tubulin ring complex (gamma-TuRC), composed of gamma-tubulin, TUBGCP2, TUBGCP3, TUBGCP4, TUBGCP5 and TUBGCP6. As to expression, widely expressed. Isoform 4: Highly expressed in skeletal muscle and in pancreas.

It is found in the golgi apparatus. Its subcellular location is the cytoplasm. The protein resides in the cytoskeleton. It localises to the microtubule organizing center. The protein localises to the centrosome. In terms of biological role, scaffolding protein that assembles several protein kinases and phosphatases on the centrosome and Golgi apparatus. Required to maintain the integrity of the Golgi apparatus. Required for microtubule nucleation at the cis-side of the Golgi apparatus. Required for association of the centrosomes with the poles of the bipolar mitotic spindle during metaphase. In complex with PDE4DIP isoform 13/MMG8/SMYLE, recruits CAMSAP2 to the Golgi apparatus and tethers non-centrosomal minus-end microtubules to the Golgi, an important step for polarized cell movement. In complex with PDE4DIP isoform 13/MMG8/SMYLE, EB1/MAPRE1 and CDK5RAP2, contributes to microtubules nucleation and extension also from the centrosome to the cell periphery. Functionally, associated with the N-methyl-D-aspartate receptor and is specifically found in the neuromuscular junction (NMJ) as well as in neuronal synapses, suggesting a role in the organization of postsynaptic specializations. This chain is A-kinase anchor protein 9 (AKAP9), found in Homo sapiens (Human).